The sequence spans 852 residues: MQGGGPRGAPIHSPSHGADSGHGLPPAVAPQRRRLTRRPGYMRSTAGSGIGFLSPAVGMPHPSSAGLTGQQSQHSQSKAGQCGLDPGSHCQASLVGKPFLKSSLVPAVASEGHLHPAQRSMRKRPVHFAVHSKNDSRQSERLTGSFKPGDSGFWQELLSSDSFKSLAPSLDAPWNKGSRGLKTVKPLASPALNGPADIASLPGFQDTFTSSFSFIQLSLGAAGERGEAEGCLPSREAEPLHQRPQEMAAEASSSDRPHGDPRHLWTFSLHAAPGLADLAQVTRSSSRQSECGTVSSSSSDTGFSSQDASSAGGRGDQGGGWADAHGWHTLLREWEPMLQDYLLSNRRQLEVTSLILKLQKCQEKVVEDGDYDTAETLRQRLEELEQEKGRLSWALPSQQPALRSFLGYLAAQIQVALHGATQRAGSDDPEAPLEGQLRTTAQDSLPASITRRDWLIREKQRLQKEIEALQARMSALEAKEKRLSQELEEQEVLLRWPGCDLMALVAQMSPGQLQEVSKALGETLTSANQAPFQVEPPETLRSLRERTKSLNLAVRELTAQVCSGEKLCSSLRRRLSDLDTRLPALLEAKMLALSGSCFSTAKELTEEIWALSSEREGLEMFLGRLLALSSRNSRRLGIVKEDHLRCRQDLALQDAAHKTRMKANTVKCMEVLEGQLSSCRCPLLGRVWKADLETCQLLMQSLQLQEAGSSPHAEDEEQVHSTGEAAQTAALAVPRTPHPEEEKSPLQVLQEWDTHSALSPHCAAGPWKEDSHIVSAEVGEKCEAIGVKLLHLEDQLLGAMYSHDEALFQSLQGELQTVKETLQAMILQLQPTKEAGEASASYPTAGAQETEA.

Disordered regions lie at residues 1–86 (MQGG…GLDP), 236–264 (EAEP…PRHL), and 280–320 (QVTR…QGGG). Residues 1 to 294 (MQGGGPRGAP…SSRQSECGTV (294 aa)) form an interaction with MAP1A region. Over residues 65-79 (AGLTGQQSQHSQSKA) the composition is skewed to polar residues. Basic and acidic residues predominate over residues 253–263 (SSDRPHGDPRH). A compositionally biased stretch (low complexity) spans 288-311 (QSECGTVSSSSSDTGFSSQDASSA). The tract at residues 295–693 (SSSSSDTGFS…LGRVWKADLE (399 aa)) is interaction with TRAF3IP1. Coiled-coil stretches lie at residues 367 to 397 (EDGD…ALPS) and 449 to 496 (ITRR…LLRW). Positions 437-594 (LRTTAQDSLP…LLEAKMLALS (158 aa)) are required for localization to punctate cytoplasmic foci. Residues 443-852 (DSLPASITRR…PTAGAQETEA (410 aa)) form a necessary and sufficient for interaction with PCNT and localization at the centrosome region. Residues 595–852 (GSCFSTAKEL…PTAGAQETEA (258 aa)) form an interaction with ATF4 and ATF5 region. Disordered stretches follow at residues 706–746 (EAGS…KSPL) and 833–852 (KEAG…ETEA). Residues 728–852 (TAALAVPRTP…PTAGAQETEA (125 aa)) form an interaction with NDEL1 and PAFAH1B1 region. The interaction with PAFAH1B1 stretch occupies residues 728–852 (TAALAVPRTP…PTAGAQETEA (125 aa)). The interaction with NDEL1 stretch occupies residues 802-835 (SHDEALFQSLQGELQTVKETLQAMILQLQPTKEA).

In terms of assembly, interacts with NDEL1. Interacts with CCDC88A (via C-terminus); the interaction is direct. Interacts with GSK3B. Interacts with tubulin alpha, ACTN2, ANKHD1, ATF4, ATF5, CEP63, EIF3S3, MAP1A, NDEL1, PAFAH1B1, RANBP9, SPTBN4, SYNE1 and TRAF3IP1. Interaction with microtubules may be mediated in part by TRAF3IP1. Interacts (via C-terminal) with PCNT. Interacts with CHCHD6. Interacts with CCDC141. Interacts with FBXW7, the substrate-recognition component of a SCF (SKP1-CUL1-F-box protein) E3 ubiquitin-protein ligase complex; the interaction targets DISC1 for proteasomal degradation. Interacts with ZNF365. Interacts with ATF4; inhibiting ATF4 transcription factor activity by disrupting ATF4 dimerization and DNA-binding. Interacts with PDE4B. Post-translationally, ubiquitinated. Ubiquitination with 'Lys-48'-linked polyubiquitin chains leads to its proteasomal degradation. Expressed in granule cell precursors within the dentate migratory stream during the first week of postnatal life and in differentiated granule cells of the hippocampus (at protein level). Detected in heart, brain, kidney, and testis. Expressed in dentate gyrus, hippocampus and in the olfactory bulb.

Its subcellular location is the cytoplasm. It is found in the cytoskeleton. The protein resides in the mitochondrion. It localises to the microtubule organizing center. The protein localises to the centrosome. Its subcellular location is the postsynaptic density. Its function is as follows. Involved in the regulation of multiple aspects of embryonic and adult neurogenesis. Required for neural progenitor proliferation in the ventrical/subventrical zone during embryonic brain development and in the adult dentate gyrus of the hippocampus. Participates in the Wnt-mediated neural progenitor proliferation as a positive regulator by modulating GSK3B activity and CTNNB1 abundance. Plays a role as a modulator of the AKT-mTOR signaling pathway controlling the tempo of the process of newborn neurons integration during adult neurogenesis, including neuron positioning, dendritic development and synapse formation. Inhibits the activation of AKT-mTOR signaling upon interaction with CCDC88A. Regulates the migration of early-born granule cell precursors toward the dentate gyrus during the hippocampal development. Inhibits ATF4 transcription factor activity in neurons by disrupting ATF4 dimerization and DNA-binding. Plays a role, together with PCNT, in the microtubule network formation. In Mus musculus (Mouse), this protein is Disrupted in schizophrenia 1 homolog.